The primary structure comprises 115 residues: Phosphoribosyl-AMP cyclohydrolase (115 aa).

Position 80 (Asp-80) interacts with Mg(2+). Residue Cys-81 coordinates Zn(2+). Residues Asp-82 and Asp-84 each contribute to the Mg(2+) site. Positions 97 and 104 each coordinate Zn(2+).

It belongs to the PRA-CH family. In terms of assembly, homodimer. Mg(2+) serves as cofactor. It depends on Zn(2+) as a cofactor.

It localises to the cytoplasm. It carries out the reaction 1-(5-phospho-beta-D-ribosyl)-5'-AMP + H2O = 1-(5-phospho-beta-D-ribosyl)-5-[(5-phospho-beta-D-ribosylamino)methylideneamino]imidazole-4-carboxamide. Its pathway is amino-acid biosynthesis; L-histidine biosynthesis; L-histidine from 5-phospho-alpha-D-ribose 1-diphosphate: step 3/9. Its function is as follows. Catalyzes the hydrolysis of the adenine ring of phosphoribosyl-AMP. The protein is Phosphoribosyl-AMP cyclohydrolase of Mycobacterium avium (strain 104).